Here is a 319-residue protein sequence, read N- to C-terminus: MTYSRILGTGGYLPARILTNADLEKLVDTNDQWIVDRTGIRERHIAADGEFTSDLATAAARAALEAANLAADDIDLLLVATTTPDLVFPSTACIVQSKLGMTNGKPAFDLQAVCSGFVYALSVADQFIKGGAAKHVLVVGAETLSRITDWNDRSNCILWGDGAGAVVVGASSEPGIIATHIHADGRHKELLRTTTGPSSGSKTPALMRMEGNAVFKMAVNTLDRIVDETLEANGLAKTDIDWLVPHQANIRIISATAKKLGMSMDNVVTTVAGHGNTSAASVPLAFDAAVRDGRIKRGQIVLMEAFGGGFTWGSALLRY.

Residues Cys-114 and His-246 contribute to the active site. Positions 247-251 (QANIR) are ACP-binding. Residue Asn-276 is part of the active site.

This sequence belongs to the thiolase-like superfamily. FabH family. As to quaternary structure, homodimer.

It localises to the cytoplasm. The catalysed reaction is malonyl-[ACP] + acetyl-CoA + H(+) = 3-oxobutanoyl-[ACP] + CO2 + CoA. Its pathway is lipid metabolism; fatty acid biosynthesis. Functionally, catalyzes the condensation reaction of fatty acid synthesis by the addition to an acyl acceptor of two carbons from malonyl-ACP. Catalyzes the first condensation reaction which initiates fatty acid synthesis and may therefore play a role in governing the total rate of fatty acid production. Possesses both acetoacetyl-ACP synthase and acetyl transacylase activities. Its substrate specificity determines the biosynthesis of branched-chain and/or straight-chain of fatty acids. The chain is Beta-ketoacyl-[acyl-carrier-protein] synthase III from Thiobacillus denitrificans (strain ATCC 25259 / T1).